The primary structure comprises 612 residues: Sulfite reductase [NADPH] hemoprotein beta-component (612 aa).

Positions 1–26 (MDDHKPIETPDGPAVDTPGIGARRYE) are disordered. [4Fe-4S] cluster is bound by residues C469, C475, C514, and C518. Residue C518 participates in siroheme binding.

The protein belongs to the nitrite and sulfite reductase 4Fe-4S domain family. As to quaternary structure, alpha(8)-beta(8). The alpha component is a flavoprotein, the beta component is a hemoprotein. Siroheme is required as a cofactor. [4Fe-4S] cluster serves as cofactor.

It catalyses the reaction hydrogen sulfide + 3 NADP(+) + 3 H2O = sulfite + 3 NADPH + 4 H(+). The protein operates within sulfur metabolism; hydrogen sulfide biosynthesis; hydrogen sulfide from sulfite (NADPH route): step 1/1. In terms of biological role, component of the sulfite reductase complex that catalyzes the 6-electron reduction of sulfite to sulfide. This is one of several activities required for the biosynthesis of L-cysteine from sulfate. This Methylorubrum extorquens (strain PA1) (Methylobacterium extorquens) protein is Sulfite reductase [NADPH] hemoprotein beta-component.